A 234-amino-acid chain; its full sequence is MSETSFNLISEKCDILSILRDHPENRIYRRKIEELSKRFTAIRKTKGDGNCFYRALGYSYLESLLGKSREIFKFKERVLQTPNDLLAAGFEEHKFRNFFNAFYSVVELVEKDGSVSSLLKVFNDQSASDHIVQFLRLLTSAFIRNRADFFRHFIDEEMDIKDFCTHEVEPMATECDHIQITALSQALSIALQVEYVDEMDTALNHHVFPEAATPSVYLLYKTSHYNILYAADKH.

The 192-residue stretch at 40–231 (TAIRKTKGDG…TSHYNILYAA (192 aa)) folds into the OTU domain. Residue aspartate 48 is part of the active site. Cysteine 51 functions as the Nucleophile in the catalytic mechanism. Histidine 224 is a catalytic residue.

It belongs to the peptidase C65 family. Widely expressed. Expressed at higher level in brain.

The enzyme catalyses Thiol-dependent hydrolysis of ester, thioester, amide, peptide and isopeptide bonds formed by the C-terminal Gly of ubiquitin (a 76-residue protein attached to proteins as an intracellular targeting signal).. Its function is as follows. Hydrolase that can remove conjugated ubiquitin from proteins in vitro and may therefore play an important regulatory role at the level of protein turnover by preventing degradation. Mediates deubiquitination of 'Lys-11'-,'Lys-48'- and 'Lys-63'-linked polyubiquitin chains, with a preference for 'Lys-63'-linked polyubiquitin chains. The chain is Ubiquitin thioesterase OTUB2 (OTUB2) from Homo sapiens (Human).